The primary structure comprises 151 residues: Large ribosomal subunit protein bL9 (151 aa).

The protein belongs to the bacterial ribosomal protein bL9 family.

Functionally, binds to the 23S rRNA. This is Large ribosomal subunit protein bL9 from Rhodococcus jostii (strain RHA1).